We begin with the raw amino-acid sequence, 246 residues long: Orotidine 5'-phosphate decarboxylase (246 aa).

Substrate-binding positions include D22, K44, 71 to 80 (DLKFHDIPNT), T131, R192, Q201, G221, and R222. The Proton donor role is filled by K73.

It belongs to the OMP decarboxylase family. Type 1 subfamily. Homodimer.

The catalysed reaction is orotidine 5'-phosphate + H(+) = UMP + CO2. It participates in pyrimidine metabolism; UMP biosynthesis via de novo pathway; UMP from orotate: step 2/2. Its function is as follows. Catalyzes the decarboxylation of orotidine 5'-monophosphate (OMP) to uridine 5'-monophosphate (UMP). This Yersinia enterocolitica serotype O:8 / biotype 1B (strain NCTC 13174 / 8081) protein is Orotidine 5'-phosphate decarboxylase.